A 587-amino-acid chain; its full sequence is NADH-quinone oxidoreductase subunit C/D (587 aa).

The interval 1–178 is NADH dehydrogenase I subunit C; it reads MAAPTTEHAE…EPFSLPDDVQ (178 aa). The NADH dehydrogenase I subunit D stretch occupies residues 202 to 587; that stretch reads DFLFLNLGPN…IDFVMADVDR (386 aa).

In the N-terminal section; belongs to the complex I 30 kDa subunit family. The protein in the C-terminal section; belongs to the complex I 49 kDa subunit family. NDH-1 is composed of 13 different subunits. Subunits NuoB, CD, E, F, and G constitute the peripheral sector of the complex.

It is found in the cell inner membrane. The catalysed reaction is a quinone + NADH + 5 H(+)(in) = a quinol + NAD(+) + 4 H(+)(out). In terms of biological role, NDH-1 shuttles electrons from NADH, via FMN and iron-sulfur (Fe-S) centers, to quinones in the respiratory chain. The immediate electron acceptor for the enzyme in this species is believed to be ubiquinone. Couples the redox reaction to proton translocation (for every two electrons transferred, four hydrogen ions are translocated across the cytoplasmic membrane), and thus conserves the redox energy in a proton gradient. This chain is NADH-quinone oxidoreductase subunit C/D, found in Methylococcus capsulatus (strain ATCC 33009 / NCIMB 11132 / Bath).